Reading from the N-terminus, the 194-residue chain is Glycerol-3-phosphate acyltransferase (194 aa).

Helical transmembrane passes span 4-24, 80-100, 112-132, 137-157, and 161-181; these read ELIL…LLLA, WVAA…FLGF, VFLG…IGIV, YISL…AAVE, and LLVG…RENI.

This sequence belongs to the PlsY family. In terms of assembly, probably interacts with PlsX.

It is found in the cell inner membrane. It carries out the reaction an acyl phosphate + sn-glycerol 3-phosphate = a 1-acyl-sn-glycero-3-phosphate + phosphate. Its pathway is lipid metabolism; phospholipid metabolism. Its function is as follows. Catalyzes the transfer of an acyl group from acyl-phosphate (acyl-PO(4)) to glycerol-3-phosphate (G3P) to form lysophosphatidic acid (LPA). This enzyme utilizes acyl-phosphate as fatty acyl donor, but not acyl-CoA or acyl-ACP. The protein is Glycerol-3-phosphate acyltransferase of Geobacter sulfurreducens (strain ATCC 51573 / DSM 12127 / PCA).